Reading from the N-terminus, the 432-residue chain is Heme-based aerotactic transducer HemAT (432 aa).

The Methyl-accepting transducer domain maps to 184–420; sequence YNQTRDEQEE…EVSRAVSHVA (237 aa).

Belongs to the methyl-accepting chemotaxis (MCP) protein family. In terms of assembly, homotetramer.

Functionally, heme-containing signal transducer responsible for aerotaxis, the migratory response toward or away from oxygen. The protein is Heme-based aerotactic transducer HemAT (hemAT) of Bacillus subtilis (strain 168).